The sequence spans 501 residues: Tegument protein US24 (501 aa).

This sequence belongs to the herpesviridae US22 family.

The protein resides in the virion tegument. The polypeptide is Tegument protein US24 (US24) (Human cytomegalovirus (strain Merlin) (HHV-5)).